The chain runs to 551 residues: (6-4)DNA photolyase (551 aa).

The region spanning 13–157 (AAAMVWFRKG…DVFSPVSHTL (145 aa)) is the Photolyase/cryptochrome alpha/beta domain. Glu-254 contributes to the phosphate binding site. Residues Lys-255, 268–272 (TTVLS), 309–313 (QLLWR), 372–375 (WMHH), Arg-378, 407–409 (DSD), and Asn-413 contribute to the FAD site. DNA is bound at residue Trp-312. The interval 374 to 379 (HHLARH) is interaction with DNA. Trp-419 is a binding site for DNA. The interval 508–551 (YASNRLDDDKPDKGKSSNSSRRKLSAGSQVTPNSSKTKQLKRSS) is disordered. Residues 512–522 (RLDDDKPDKGK) show a composition bias toward basic and acidic residues. Over residues 533 to 544 (AGSQVTPNSSKT) the composition is skewed to polar residues.

The protein belongs to the DNA photolyase class-1 family. The cofactor is FAD.

It carries out the reaction (6-4) photoproduct (in DNA) = 2 pyrimidine residues (in DNA).. Involved in repair of UV radiation-induced DNA damage. Catalyzes the photoreactivation of pyrimidine [6-4] pyrimidone photoproduct (6-4 products). This chain is (6-4)DNA photolyase (UVR3), found in Oryza sativa subsp. japonica (Rice).